The following is a 353-amino-acid chain: uncharacterized protein (353 aa).

Disordered stretches follow at residues 1 to 24 (MSTS…QQSQ), 245 to 280 (NKSS…EKVP), and 305 to 353 (AAGK…DLNN). Low complexity predominate over residues 9-24 (NKKNNTKQQKYQQQSQ). Residues 254 to 280 (KSGDKSTVKSTDKQVEKKVEESSEKVP) are compositionally biased toward basic and acidic residues. A compositionally biased stretch (low complexity) spans 321–332 (VTTSTSESTVEV). Acidic residues predominate over residues 342–353 (EPDEEVFEDLNN).

This is an uncharacterized protein from Acanthamoeba polyphaga mimivirus (APMV).